A 453-amino-acid chain; its full sequence is Glutamyl-tRNA(Gln) amidotransferase subunit A (453 aa).

Catalysis depends on charge relay system residues lysine 55 and serine 130. The Acyl-ester intermediate role is filled by serine 154.

Belongs to the amidase family. GatA subfamily. Heterotrimer of A, B and C subunits.

It catalyses the reaction L-glutamyl-tRNA(Gln) + L-glutamine + ATP + H2O = L-glutaminyl-tRNA(Gln) + L-glutamate + ADP + phosphate + H(+). In terms of biological role, allows the formation of correctly charged Gln-tRNA(Gln) through the transamidation of misacylated Glu-tRNA(Gln) in organisms which lack glutaminyl-tRNA synthetase. The reaction takes place in the presence of glutamine and ATP through an activated gamma-phospho-Glu-tRNA(Gln). This chain is Glutamyl-tRNA(Gln) amidotransferase subunit A, found in Aliarcobacter butzleri (strain RM4018) (Arcobacter butzleri).